Reading from the N-terminus, the 556-residue chain is Thermosome subunit beta (556 aa).

The segment at 530–556 (LSTDKGDDDGGAGGMGGGMGGGMGGMM) is disordered. The segment covering 540-556 (GAGGMGGGMGGGMGGMM) has biased composition (gly residues).

The protein belongs to the TCP-1 chaperonin family. As to quaternary structure, forms an oligomeric complex of eight-membered rings.

In terms of biological role, molecular chaperone; binds unfolded polypeptides in vitro, and has a weak ATPase activity. The protein is Thermosome subunit beta (thsB) of Halobacterium salinarum (strain ATCC 700922 / JCM 11081 / NRC-1) (Halobacterium halobium).